Reading from the N-terminus, the 321-residue chain is Methionyl-tRNA formyltransferase (321 aa).

(6S)-5,6,7,8-tetrahydrofolate is bound at residue 111-114; the sequence is SLLP.

This sequence belongs to the Fmt family.

The enzyme catalyses L-methionyl-tRNA(fMet) + (6R)-10-formyltetrahydrofolate = N-formyl-L-methionyl-tRNA(fMet) + (6S)-5,6,7,8-tetrahydrofolate + H(+). In terms of biological role, attaches a formyl group to the free amino group of methionyl-tRNA(fMet). The formyl group appears to play a dual role in the initiator identity of N-formylmethionyl-tRNA by promoting its recognition by IF2 and preventing the misappropriation of this tRNA by the elongation apparatus. The chain is Methionyl-tRNA formyltransferase from Bifidobacterium animalis subsp. lactis (strain AD011).